Reading from the N-terminus, the 547-residue chain is Probable bifunctional tRNA threonylcarbamoyladenosine biosynthesis protein (547 aa).

A kae1 region spans residues 1–329 (MGNSNELICI…FRTDMVDVNW (329 aa)). Fe cation-binding residues include His112, His116, and Tyr133. Residues 133–137 (YVSGG), Asp165, Gly178, Glu182, and Asn262 each bind L-threonylcarbamoyladenylate. Asp290 is a Fe cation binding site. Residues 346–547 (QIPRHLIGKG…KEVEKRGRYL (202 aa)) form the Protein kinase domain. Residues 352–360 (IGKGAEADI) and Lys373 contribute to the ATP site. Asp465 serves as the catalytic Proton acceptor; for kinase activity.

This sequence in the N-terminal section; belongs to the KAE1 / TsaD family. It in the C-terminal section; belongs to the protein kinase superfamily. Tyr protein kinase family. BUD32 subfamily. As to quaternary structure, component of the KEOPS complex that consists of Kae1, Bud32, Cgi121 and Pcc1; the whole complex dimerizes. Fe(2+) serves as cofactor.

The protein localises to the cytoplasm. It carries out the reaction L-seryl-[protein] + ATP = O-phospho-L-seryl-[protein] + ADP + H(+). It catalyses the reaction L-threonyl-[protein] + ATP = O-phospho-L-threonyl-[protein] + ADP + H(+). The catalysed reaction is L-threonylcarbamoyladenylate + adenosine(37) in tRNA = N(6)-L-threonylcarbamoyladenosine(37) in tRNA + AMP + H(+). Its function is as follows. Required for the formation of a threonylcarbamoyl group on adenosine at position 37 (t(6)A37) in tRNAs that read codons beginning with adenine. Is a component of the KEOPS complex that is probably involved in the transfer of the threonylcarbamoyl moiety of threonylcarbamoyl-AMP (TC-AMP) to the N6 group of A37. The Kae1 domain likely plays a direct catalytic role in this reaction. The Bud32 domain probably displays kinase activity that regulates Kae1 function. This is Probable bifunctional tRNA threonylcarbamoyladenosine biosynthesis protein from Methanococcus vannielii (strain ATCC 35089 / DSM 1224 / JCM 13029 / OCM 148 / SB).